Here is a 146-residue protein sequence, read N- to C-terminus: D-aminoacyl-tRNA deacylase (146 aa).

The short motif at 137-138 (GP) is the Gly-cisPro motif, important for rejection of L-amino acids element.

The protein belongs to the DTD family. As to quaternary structure, homodimer.

The protein localises to the cytoplasm. It catalyses the reaction glycyl-tRNA(Ala) + H2O = tRNA(Ala) + glycine + H(+). The enzyme catalyses a D-aminoacyl-tRNA + H2O = a tRNA + a D-alpha-amino acid + H(+). An aminoacyl-tRNA editing enzyme that deacylates mischarged D-aminoacyl-tRNAs. Also deacylates mischarged glycyl-tRNA(Ala), protecting cells against glycine mischarging by AlaRS. Acts via tRNA-based rather than protein-based catalysis; rejects L-amino acids rather than detecting D-amino acids in the active site. By recycling D-aminoacyl-tRNA to D-amino acids and free tRNA molecules, this enzyme counteracts the toxicity associated with the formation of D-aminoacyl-tRNA entities in vivo and helps enforce protein L-homochirality. In Bacillus cereus (strain B4264), this protein is D-aminoacyl-tRNA deacylase.